Here is a 745-residue protein sequence, read N- to C-terminus: Cullin-2 (745 aa).

At K393 the chain carries N6-acetyllysine. Residue T661 is modified to Phosphothreonine. Positions 675 to 735 constitute a Cullin neddylation domain; the sequence is DRKMYLQAAI…IDKQYIERSQ (61 aa). A Glycyl lysine isopeptide (Lys-Gly) (interchain with G-Cter in NEDD8) cross-link involves residue K689.

Belongs to the cullin family. In terms of assembly, component of multiple Cul2-RING (CRL2) E3 ubiquitin-protein ligase complexes consisting of CUL2, Elongin BC (ELOB and ELOC), RBX1 and a variable substrate-specific adapter; this complex is also known as ECS (Elongin BC-CUL2/5-SOCS-box protein) complex and may consist of CUL2 or CUL5. Component of the ECS(VHL) or CBC(VHL) complex containing CUL2, RBX1, ELOB, ELOC and VHL. Component of the ECS(MED8) complex with the probable substrate recognition component MED8. Component of multiple ECS complexes part of the DesCEND (destruction via C-end degrons) pathway, which contain either KLHDC2, KLHDC3, KLHDC10, APPBP2, FEM1A, FEM1B or FEM1C as substrate-recognition component. Component of the ECS(LRR1) complex with the substrate recognition component LRR1. Component of a CRL2(FEM1B) complex containing CUL2, RBX1, ELOB, ELOC and FEM1B. Component of a CRL2(FEM1C) complex containing CUL2, RBX1, ELOB, ELOC and FEM1C. Part of an E3 ubiquitin-protein ligase complex including ZYG11B, CUL2 and Elongin BC. Part of an E3 ubiquitin-protein ligase complex including ZER1, CUL2 and Elongin BC. Interacts with RBX1, RNF7, FEM1B and TIP120A/CAND1. Found in a complex composed of LIMD1, VHL, EGLN1/PHD2, ELOB and CUL2. Interacts (when neddylated) with ARIH1; leading to activate the E3 ligase activity of ARIH1. Interacts (unneddylated form) with DCUN1D1, DCUN1D2, DCUN1D3, DCUN1D4 and DCUN1D5; these interactions promote the cullin neddylation. Component of VCB (elongins BC/CUL2/VHL) complex that contains at least DCUN1D1, CUL2 and VHL; this complex triggers CUL2 neddylation and consequently cullin ring ligase (CRL) substrates polyubiquitylation. In terms of processing, neddylated; which enhances the ubiquitination activity of ECS (Elongin BC-CUL2/5-SOCS-box protein) E3 ubiquitin-protein ligase complexes. Neddylation leads to structural rearrangment in the complex that allows interaction between the E2 ubiquitin-conjugating enzyme and the acceptor ubiquitin. CBC(VHL) complex formation seems to promote neddylation. Deneddylated via its interaction with the COP9 signalosome (CSN) complex.

The protein localises to the nucleus. It functions in the pathway protein modification; protein ubiquitination. Its function is as follows. Core component of multiple cullin-RING-based ECS (ElonginB/C-CUL2/5-SOCS-box protein) E3 ubiquitin-protein ligase complexes, which mediate the ubiquitination of target proteins. CUL2 may serve as a rigid scaffold in the complex and may contribute to catalysis through positioning of the substrate and the ubiquitin-conjugating enzyme. The E3 ubiquitin-protein ligase activity of the complex is dependent on the neddylation of the cullin subunit and is inhibited by the association of the deneddylated cullin subunit with TIP120A/CAND1. The functional specificity of the ECS complex depends on the substrate recognition component. ECS(VHL) mediates the ubiquitination of hypoxia-inducible factor (HIF). A number of ECS complexes (containing either KLHDC2, KLHDC3, KLHDC10, APPBP2, FEM1A, FEM1B or FEM1C as substrate-recognition component) are part of the DesCEND (destruction via C-end degrons) pathway, which recognizes a C-degron located at the extreme C terminus of target proteins, leading to their ubiquitination and degradation. ECS complexes and ARIH1 collaborate in tandem to mediate ubiquitination of target proteins. ECS(LRR1) ubiquitinates MCM7 and promotes CMG replisome disassembly by VCP and chromatin extraction during S-phase. This chain is Cullin-2 (CUL2), found in Pongo abelii (Sumatran orangutan).